A 456-amino-acid chain; its full sequence is ATP synthase subunit beta (456 aa).

Position 135 to 142 (135 to 142) interacts with ATP; it reads GGAGVGKT.

Belongs to the ATPase alpha/beta chains family. In terms of assembly, F-type ATPases have 2 components, CF(1) - the catalytic core - and CF(0) - the membrane proton channel. CF(1) has five subunits: alpha(3), beta(3), gamma(1), delta(1), epsilon(1). CF(0) has four main subunits: a(1), b(1), b'(1) and c(9-12).

The protein resides in the cellular thylakoid membrane. The enzyme catalyses ATP + H2O + 4 H(+)(in) = ADP + phosphate + 5 H(+)(out). Its function is as follows. Produces ATP from ADP in the presence of a proton gradient across the membrane. The catalytic sites are hosted primarily by the beta subunits. This chain is ATP synthase subunit beta (atpD), found in Acaryochloris marina (strain MBIC 11017).